Here is a 261-residue protein sequence, read N- to C-terminus: Ethanolamine ammonia-lyase small subunit (261 aa).

The adenosylcob(III)alamin site is built by Val157, Glu178, and Cys207.

It belongs to the EutC family. The basic unit is a heterodimer which dimerizes to form tetramers. The heterotetramers trimerize; 6 large subunits form a core ring with 6 small subunits projecting outwards. Requires adenosylcob(III)alamin as cofactor.

Its subcellular location is the bacterial microcompartment. The catalysed reaction is ethanolamine = acetaldehyde + NH4(+). It functions in the pathway amine and polyamine degradation; ethanolamine degradation. In terms of biological role, catalyzes the deamination of various vicinal amino-alcohols to oxo compounds. Allows this organism to utilize ethanolamine as the sole source of nitrogen and carbon in the presence of external vitamin B12. The polypeptide is Ethanolamine ammonia-lyase small subunit (Rhodopseudomonas palustris (strain BisA53)).